We begin with the raw amino-acid sequence, 78 residues long: Acyl carrier protein (78 aa).

A Carrier domain is found at Ser-2–Gln-77. The residue at position 37 (Ser-37) is an O-(pantetheine 4'-phosphoryl)serine.

Belongs to the acyl carrier protein (ACP) family. 4'-phosphopantetheine is transferred from CoA to a specific serine of apo-ACP by AcpS. This modification is essential for activity because fatty acids are bound in thioester linkage to the sulfhydryl of the prosthetic group.

The protein localises to the cytoplasm. The protein operates within lipid metabolism; fatty acid biosynthesis. In terms of biological role, carrier of the growing fatty acid chain in fatty acid biosynthesis. This Sodalis glossinidius (strain morsitans) protein is Acyl carrier protein.